The chain runs to 266 residues: METLKSNKARLEYLINDMRRERNDNDVLVMPSSFEDLWELYRGLANVRPALPVSDEYLAVQDAMLSDLNRQHVTDLKDLKPIKGDNIFVWQGDITTLKIDAIVNAANSRFLGCMQANHDCIDNIIHTKAGVQVRLDCAEIIRQQGRNEGVGKAKITRGYNLPAKYIIHTVGPQIRRLPVSKLNQDLLAKCYLSCLKLADQQSLNHIAFCCISTGVFAFPQDEAAEIAVRTVESYLKETNSTLKVVFNVFTDKDLQLYKEAFNRDAE.

The region spanning 74–265 is the Macro domain; the sequence is TDLKDLKPIK…LYKEAFNRDA (192 aa). ADP-D-ribose is bound by residues Asp93, Ile94, and Asn107. Cys113, His118, and Cys120 together coordinate Zn(2+). ADP-D-ribose is bound by residues Cys120, Ile121, Asp122, Ser212, Thr213, Gly214, and Phe216.

Belongs to the MacroD-type family. Zn-Macro subfamily. The cofactor is Zn(2+).

The enzyme catalyses 4-O-(ADP-D-ribosyl)-L-aspartyl-[protein] + H2O = L-aspartyl-[protein] + ADP-D-ribose + H(+). Functionally, ADP-ribosylhydrolase that specifically reverses the SirTM-mediated mono-ADP-ribosylation at an asparatate residue of GcvH-L, by releasing ADP-ribose from the target protein. May play a role in the regulation of the response to host-induced oxidative stress. The sequence is that of Protein-ADP-ribose hydrolase from Staphylococcus aureus (strain MRSA252).